A 446-amino-acid chain; its full sequence is Butyryl-CoA:acetate CoA-transferase (446 aa).

220-224 (GIGGM) is a CoA binding site. Catalysis depends on glutamate 245, which acts as the 5-glutamyl coenzyme A thioester intermediate. CoA-binding residues include valine 320, glycine 343, and lysine 370.

Belongs to the acetyl-CoA hydrolase/transferase family. Butyryl-CoA CoA-transferase subfamily.

It catalyses the reaction butanoate + acetyl-CoA = butanoyl-CoA + acetate. The catalysed reaction is propanoate + acetyl-CoA = propanoyl-CoA + acetate. It participates in lipid metabolism; butanoate metabolism. Its function is as follows. Coenzyme A-transferase that converts butyryl-CoA to butyrate. Can also use proprionyl-CoA as substrate in vitro. The sequence is that of Butyryl-CoA:acetate CoA-transferase from Anaerostipes caccae (strain DSM 14662 / CCUG 47493 / JCM 13470 / NCIMB 13811 / L1-92).